The sequence spans 52 residues: MLGWALIFLIVAIIAGTLGFSGVAGAASWIAQVLFLVFLALLVISLLGGRRV.

Transmembrane regions (helical) follow at residues 4–24 (WALIFLIVAIIAGTLGFSGVA) and 29–49 (WIAQVLFLVFLALLVISLLGG).

The protein belongs to the UPF0391 family.

It is found in the cell membrane. The polypeptide is UPF0391 membrane protein Tgr7_2500 (Thioalkalivibrio sulfidiphilus (strain HL-EbGR7)).